We begin with the raw amino-acid sequence, 643 residues long: E3 ubiquitin-protein ligase Praja-1 (643 aa).

The disordered stretch occupies residues 1–363; it reads MGQESSKPVW…SDDYYKYCDE (363 aa). Basic and acidic residues-rich tracts occupy residues 95–105, 145–158, and 173–183; these read DYSRYPPREYR, KFKDDKLYDPEKGA, and RDVREERDKLD. Over residues 200-209 the composition is skewed to low complexity; the sequence is QSSVASQSSS. Basic and acidic residues predominate over residues 213–227; sequence LATKGDSSERERREQ. Serine 265 is modified (phosphoserine). Threonine 277 is subject to Phosphothreonine. Composition is skewed to basic and acidic residues over residues 289–310 and 320–362; these read RWRDTANDNEGHSDGLARRGRG and KYPE…KYCD. Phosphoserine is present on residues serine 365 and serine 367. The tract at residues 380–454 is disordered; it reads RSREQTLSSS…REPSLQEEQA (75 aa). Over residues 410–439 the composition is skewed to low complexity; sequence SASTGTSPGPGASASAGAGAGASAGSNGSN. The RING-type zinc finger occupies 595–636; it reads CPICCSEYVKGEVATELPCHHYFHKPCVSIWLQKSGTCPVCR.

Binds ubiquitin-conjugating enzymes (E2s). In vitro, interacts with the ubiquitin-conjugating enzyme, UBE2D2. In terms of processing, substrate for E2-dependent ubiquitination. Expressed in various regions of the brain including the cerebellum, cerebral cortex, medulla, occipital pole, frontal lobe, temporal lobe and putamen. Highest levels in the cerebral cortex.

The enzyme catalyses S-ubiquitinyl-[E2 ubiquitin-conjugating enzyme]-L-cysteine + [acceptor protein]-L-lysine = [E2 ubiquitin-conjugating enzyme]-L-cysteine + N(6)-ubiquitinyl-[acceptor protein]-L-lysine.. In terms of biological role, has E2-dependent E3 ubiquitin-protein ligase activity. Ubiquitinates MAGED1 antigen leading to its subsequent degradation by proteasome. May be involved in protein sorting. The protein is E3 ubiquitin-protein ligase Praja-1 (PJA1) of Homo sapiens (Human).